The following is a 402-amino-acid chain: Propionate kinase (402 aa).

Positions 11 and 18 each coordinate ATP. Asparagine 11 lines the Mg(2+) pocket. Substrate is bound at residue arginine 86. Aspartate 143 acts as the Proton donor/acceptor in catalysis. Residues histidine 175, 203–207 (HLGNG), 278–280 (DLR), and 326–330 (GIGEN) each bind ATP.

The protein belongs to the acetokinase family. TdcD subfamily. Homodimer. Mg(2+) is required as a cofactor.

It carries out the reaction propanoate + ATP = propanoyl phosphate + ADP. It participates in amino-acid degradation; L-threonine degradation via propanoate pathway; propanoate from L-threonine: step 4/4. In terms of biological role, catalyzes the conversion of propionyl phosphate and ADP to propionate and ATP. The protein is Propionate kinase of Salmonella agona (strain SL483).